Reading from the N-terminus, the 203-residue chain is Urease accessory protein UreG (203 aa).

12-19 (GPVGSGKT) contacts GTP.

This sequence belongs to the SIMIBI class G3E GTPase family. UreG subfamily. As to quaternary structure, homodimer. UreD, UreF and UreG form a complex that acts as a GTP-hydrolysis-dependent molecular chaperone, activating the urease apoprotein by helping to assemble the nickel containing metallocenter of UreC. The UreE protein probably delivers the nickel.

The protein resides in the cytoplasm. Its function is as follows. Facilitates the functional incorporation of the urease nickel metallocenter. This process requires GTP hydrolysis, probably effectuated by UreG. The chain is Urease accessory protein UreG from Alteromonas mediterranea (strain DSM 17117 / CIP 110805 / LMG 28347 / Deep ecotype).